Consider the following 287-residue polypeptide: Chlorophyll a-b binding protein CP29.2, chloroplastic (287 aa).

A chloroplast-targeting transit peptide spans 1-31 (MAATSTAAAASSIMGTRVVSDISSNSSRFTA). Arginine 32 is subject to N2-acetylarginine. Residue threonine 37 is modified to Phosphothreonine. Tryptophan 55 contributes to the chlorophyll b binding site. Chlorophyll a is bound at residue phenylalanine 75. Phosphothreonine occurs at positions 109 and 111. Positions 137 and 140 each coordinate chlorophyll a. Residues 143-163 (WAMLATLGAITVEWLTGVTWQ) form a helical membrane-spanning segment. Leucine 177 lines the chlorophyll a pocket. Residues 181–201 (LPFSISTLIWIEVLVIGYIEF) traverse the membrane as a helical segment. Chlorophyll b-binding residues include glutamate 200 and arginine 203. Chlorophyll a contacts are provided by glutamate 239, histidine 242, arginine 244, glutamine 256, and histidine 271. The chain crosses the membrane as a helical span at residues 245 to 265 (LAMVGFLGFAVQAAATGKGPL).

Belongs to the light-harvesting chlorophyll a/b-binding (LHC) protein family. The LHC complex consists of chlorophyll a-b binding proteins. It depends on Binds at least 14 chlorophylls (8 Chl-a and 6 Chl-b) and carotenoids such as lutein and neoxanthin. as a cofactor. In terms of processing, photoregulated by reversible phosphorylation of its threonine residues.

It is found in the plastid. The protein localises to the chloroplast thylakoid membrane. Functionally, the light-harvesting complex (LHC) functions as a light receptor, it captures and delivers excitation energy to photosystems with which it is closely associated. The sequence is that of Chlorophyll a-b binding protein CP29.2, chloroplastic (LHCB4.2) from Arabidopsis thaliana (Mouse-ear cress).